The following is a 546-amino-acid chain: Putative serine/threonine-protein kinase L268 (546 aa).

The region spanning methionine 1 to valine 112 is the Cyclin N-terminal domain. One can recognise a Protein kinase domain in the interval isoleucine 260–asparagine 544. Residues leucine 266–valine 274 and lysine 287 contribute to the ATP site. The active-site Proton acceptor is the aspartate 389.

Belongs to the protein kinase superfamily. Ser/Thr protein kinase family.

It catalyses the reaction L-seryl-[protein] + ATP = O-phospho-L-seryl-[protein] + ADP + H(+). The catalysed reaction is L-threonyl-[protein] + ATP = O-phospho-L-threonyl-[protein] + ADP + H(+). The polypeptide is Putative serine/threonine-protein kinase L268 (Acanthamoeba polyphaga mimivirus (APMV)).